An 850-amino-acid polypeptide reads, in one-letter code: Protein monoglycylase TTLL8 (850 aa).

2 disordered regions span residues 1–29 and 228–254; these read MEPE…QGIS and RSSR…DAEN. The TTL domain occupies 222–580; that stretch reads SHQSCSRSSR…DRSCDIGNFE (359 aa). ATP-binding positions include Lys-354, 360 to 361, 392 to 395, 405 to 407, and 449 to 450; these read RG, QKYI, KFD, and CN. Position 360 (Arg-360) interacts with a protein. Asp-527, Glu-540, and Asn-542 together coordinate Mg(2+). Glu-540 contacts ATP. Residues 627 to 652 form a disordered region; that stretch reads AQPLKARGPSAMPDPAQGPPSPALQR.

The cofactor is Mg(2+).

The protein resides in the cytoplasm. The protein localises to the cytoskeleton. Its subcellular location is the cell projection. It localises to the cilium. It is found in the cilium axoneme. The protein resides in the flagellum axoneme. It carries out the reaction L-glutamyl-[protein] + glycine + ATP = glycyl-L-glutamyl-[protein] + ADP + phosphate + H(+). Functionally, monoglycylase which modifies both tubulin and non-tubulin proteins, adding a single glycine to the gamma-carboxyl groups of specific glutamate residues to generate monoglycine side chains within the C-terminal tail of target proteins. Not involved in elongation step of the polyglycylation reaction. Preferentially monoglycylates alpha-tubulin over beta-tubulin. Together with TTLL3, mediates microtubule glycylation of primary and motile cilia, which is essential for their stability and maintenance. Together with TTLL3, glycylates sperm flagella which regulates axonemal dynein motor activity, thereby controlling flagellar beat, directional sperm swimming and male fertility. Monoglycylates non-tubulin proteins such as ANP32A, ANP32B, SET, NCL and NAP1. The polypeptide is Protein monoglycylase TTLL8 (Homo sapiens (Human)).